A 131-amino-acid polypeptide reads, in one-letter code: ATP synthase epsilon chain (131 aa).

Belongs to the ATPase epsilon chain family. F-type ATPases have 2 components, CF(1) - the catalytic core - and CF(0) - the membrane proton channel. CF(1) has five subunits: alpha(3), beta(3), gamma(1), delta(1), epsilon(1). CF(0) has three main subunits: a, b and c.

The protein localises to the cell membrane. Its function is as follows. Produces ATP from ADP in the presence of a proton gradient across the membrane. The polypeptide is ATP synthase epsilon chain (Clostridium novyi (strain NT)).